A 67-amino-acid polypeptide reads, in one-letter code: Protein AaeX (67 aa).

Helical transmembrane passes span 3–23 (VLPV…EIIV) and 43–63 (LVWH…YVVS).

It belongs to the AaeX family.

It localises to the cell membrane. The polypeptide is Protein AaeX (Erwinia tasmaniensis (strain DSM 17950 / CFBP 7177 / CIP 109463 / NCPPB 4357 / Et1/99)).